We begin with the raw amino-acid sequence, 778 residues long: LPS-assembly protein LptD (778 aa).

The N-terminal stretch at 1-23 (MKTRYSVLSVAMTAAFYTQYAQA) is a signal peptide.

The protein belongs to the LptD family. In terms of assembly, component of the lipopolysaccharide transport and assembly complex. Interacts with LptE and LptA.

Its subcellular location is the cell outer membrane. Functionally, together with LptE, is involved in the assembly of lipopolysaccharide (LPS) at the surface of the outer membrane. The sequence is that of LPS-assembly protein LptD from Actinobacillus pleuropneumoniae serotype 7 (strain AP76).